The following is a 180-amino-acid chain: Cytidylate kinase (180 aa).

7-15 lines the ATP pocket; sequence GLPGSGTTT.

It belongs to the cytidylate kinase family. Type 2 subfamily.

The protein resides in the cytoplasm. It carries out the reaction CMP + ATP = CDP + ADP. The enzyme catalyses dCMP + ATP = dCDP + ADP. This is Cytidylate kinase from Methanosarcina acetivorans (strain ATCC 35395 / DSM 2834 / JCM 12185 / C2A).